The chain runs to 207 residues: Serotype 2 fimbrial subunit (207 aa).

A signal peptide spans Met1–Ala26. Residues Cys42 and Cys85 are joined by a disulfide bond.

The protein belongs to the fimbrial protein family.

It is found in the fimbrium. In terms of biological role, bordetella pertussis is the causative agent of whooping cough. An essential step in the disease process is the attachment of the bacteria to the ciliated epithelium of the respiratory tract, enabling the organism to resist normal host-clearance mechanisms. It is unclear which bacterial cell surface component are responsible for adherence but the fimbriae of B.pertussis are prime candidates for being involved in this process. This is Serotype 2 fimbrial subunit (fim2) from Bordetella pertussis (strain Tohama I / ATCC BAA-589 / NCTC 13251).